Consider the following 88-residue polypeptide: UPF0298 protein Bcer98_2635 (88 aa).

It belongs to the UPF0298 family.

The protein localises to the cytoplasm. The chain is UPF0298 protein Bcer98_2635 from Bacillus cytotoxicus (strain DSM 22905 / CIP 110041 / 391-98 / NVH 391-98).